The primary structure comprises 207 residues: Glycerol-3-phosphate acyltransferase (207 aa).

5 helical membrane-spanning segments follow: residues 4–24, 58–78, 86–106, 120–140, and 162–182; these read VVAT…SFAV, ILTL…AQWL, ETGI…PVFH, ILLA…LIIA, and VLMN…VLLI.

It belongs to the PlsY family. Probably interacts with PlsX.

The protein resides in the cell inner membrane. The catalysed reaction is an acyl phosphate + sn-glycerol 3-phosphate = a 1-acyl-sn-glycero-3-phosphate + phosphate. The protein operates within lipid metabolism; phospholipid metabolism. Functionally, catalyzes the transfer of an acyl group from acyl-phosphate (acyl-PO(4)) to glycerol-3-phosphate (G3P) to form lysophosphatidic acid (LPA). This enzyme utilizes acyl-phosphate as fatty acyl donor, but not acyl-CoA or acyl-ACP. The chain is Glycerol-3-phosphate acyltransferase from Ralstonia pickettii (strain 12J).